Consider the following 637-residue polypeptide: MSNWSINDARTGYNVNYWSQGLYGISDEGEATVSPDPTRPECSIGLNELAKDMVKSGVNLPVLVRFPQILHHRVNSLCQAFNQAIQKYQYQADYLLVYPIKVNQQQTVVEEILASQVEKEVPQLGLEAGSKPELMAVLAMAQKASSVIICNGYKDIEYIRLALIGEKLGHKVYIVLEKLSELKTVLEESKKLGVTPRLGLRVRLAFQGKGKWQASGGEKSKFGLSASQVLTVIESLKSEEMLDSLQLLHFHLGSQIANIRDIRQGVSEAGRFYCELQKLGANVKCFDVGGGLAVDYDGTRSQSSSSMNYGLTEYANNIVSVLTDICNEYEQPMPRIISESGCYLTAHHAVLITDVIGTEAYKPEDIQPPAEDAPQLLHNMWHSWNEISGRADQRALIEIYHDCQSDLTEVHSLFALGQLSLTDRAWAEQVNLRVCHELQGVMSSKYRFHRPIIDELTEKLADKFFVNFSLFQSLPDAWGIDQVFPIMPLSGLDKAPERRAVMLDITCDSDGTIDQYVDGQGIETTLPVPAWSAESPYLIGFFLVGAYQEILGDMHNLFGDTNSAVIRLDDDGRTNIESVLAGDTVADVLRYVNLDAVSFMRTYEELVNKHIQEDERANILEELQLGLKGYTYLEDFS.

The residue at position 101 (Lys101) is an N6-(pyridoxal phosphate)lysine. 286-296 lines the substrate pocket; the sequence is FDVGGGLAVDY.

It belongs to the Orn/Lys/Arg decarboxylase class-II family. SpeA subfamily. Mg(2+) serves as cofactor. The cofactor is pyridoxal 5'-phosphate.

It catalyses the reaction L-arginine + H(+) = agmatine + CO2. Its pathway is amine and polyamine biosynthesis; agmatine biosynthesis; agmatine from L-arginine: step 1/1. Catalyzes the biosynthesis of agmatine from arginine. The chain is Biosynthetic arginine decarboxylase from Shewanella woodyi (strain ATCC 51908 / MS32).